The chain runs to 390 residues: Magnesium-protoporphyrin IX monomethyl ester [oxidative] cyclase (390 aa).

Residues Met1–Pro20 are disordered.

It belongs to the AcsF family. Fe cation serves as cofactor.

It carries out the reaction Mg-protoporphyrin IX 13-monomethyl ester + 3 NADPH + 3 O2 + 2 H(+) = 3,8-divinyl protochlorophyllide a + 3 NADP(+) + 5 H2O. Its pathway is porphyrin-containing compound metabolism; chlorophyll biosynthesis (light-independent). In terms of biological role, catalyzes the formation of the isocyclic ring in chlorophyll biosynthesis. Mediates the cyclase reaction, which results in the formation of divinylprotochlorophyllide (Pchlide) characteristic of all chlorophylls from magnesium-protoporphyrin IX 13-monomethyl ester (MgPMME). This chain is Magnesium-protoporphyrin IX monomethyl ester [oxidative] cyclase, found in Prochlorococcus marinus (strain MIT 9301).